The chain runs to 282 residues: Bifunctional protein FolD 2 (282 aa).

NADP(+) contacts are provided by residues 164–166 (GRS) and S189.

This sequence belongs to the tetrahydrofolate dehydrogenase/cyclohydrolase family. Homodimer.

The catalysed reaction is (6R)-5,10-methylene-5,6,7,8-tetrahydrofolate + NADP(+) = (6R)-5,10-methenyltetrahydrofolate + NADPH. It carries out the reaction (6R)-5,10-methenyltetrahydrofolate + H2O = (6R)-10-formyltetrahydrofolate + H(+). It functions in the pathway one-carbon metabolism; tetrahydrofolate interconversion. Its function is as follows. Catalyzes the oxidation of 5,10-methylenetetrahydrofolate to 5,10-methenyltetrahydrofolate and then the hydrolysis of 5,10-methenyltetrahydrofolate to 10-formyltetrahydrofolate. This is Bifunctional protein FolD 2 from Lactobacillus johnsonii (strain CNCM I-12250 / La1 / NCC 533).